The chain runs to 365 residues: Magnesium-chelatase subunit ChlI homolog (365 aa).

Residue 40–47 participates in ATP binding; the sequence is EKGTAKST. The tract at residues 340-365 is disordered; sequence FKQQNNKDNEEKEEHKDDDVKKNMMK. Basic and acidic residues predominate over residues 344–365; the sequence is NNKDNEEKEEHKDDDVKKNMMK.

This sequence belongs to the Mg-chelatase subunits D/I family.

This Methanocaldococcus jannaschii (strain ATCC 43067 / DSM 2661 / JAL-1 / JCM 10045 / NBRC 100440) (Methanococcus jannaschii) protein is Magnesium-chelatase subunit ChlI homolog.